We begin with the raw amino-acid sequence, 712 residues long: NURS complex subunit red1 (712 aa).

Positions methionine 1–glutamate 22 are enriched in basic and acidic residues. 3 disordered regions span residues methionine 1–proline 71, asparagine 107–glutamine 195, and aspartate 323–methionine 348. Residues isoleucine 5–glutamate 32 are a coiled coil. Over residues glutamate 23 to valine 42 the composition is skewed to acidic residues. Over residues serine 130 to serine 141 the composition is skewed to low complexity. Polar residues-rich tracts occupy residues phenylalanine 178 to threonine 193 and asparagine 327 to methionine 348. The stretch at serine 351 to lysine 379 forms a coiled coil. The tract at residues proline 428–threonine 447 is disordered. Residues alanine 471–serine 501 adopt a coiled-coil conformation. The span at glutamine 545–glutamate 567 shows a compositional bias: polar residues. The segment at glutamine 545–threonine 568 is disordered. The C3H1-type zinc finger occupies phenylalanine 618–arginine 639.

As to quaternary structure, interacts with mmi1, pla1 and rrp6.

It is found in the nucleus. Functionally, promotes the exosome-mediated degradation of mRNAs containing a DSR (determinant of selective removal) signal sequence from mitotic cells. This is NURS complex subunit red1 from Schizosaccharomyces pombe (strain 972 / ATCC 24843) (Fission yeast).